Reading from the N-terminus, the 140-residue chain is Peptide methionine sulfoxide reductase MsrB (140 aa).

Residues 10 to 132 (EEDWKSVLTP…NSVSLGFTKE (123 aa)) enclose the MsrB domain. 4 residues coordinate Zn(2+): C49, C52, C98, and C101. The Nucleophile role is filled by C121.

It belongs to the MsrB Met sulfoxide reductase family. Zn(2+) serves as cofactor.

It catalyses the reaction L-methionyl-[protein] + [thioredoxin]-disulfide + H2O = L-methionyl-(R)-S-oxide-[protein] + [thioredoxin]-dithiol. The polypeptide is Peptide methionine sulfoxide reductase MsrB (Methanosarcina mazei (strain ATCC BAA-159 / DSM 3647 / Goe1 / Go1 / JCM 11833 / OCM 88) (Methanosarcina frisia)).